Reading from the N-terminus, the 1237-residue chain is Zinc finger protein 687 (1237 aa).

Disordered stretches follow at residues 1 to 80 (MGDM…PDIS) and 96 to 330 (EALA…PLKV). Residues 97-111 (ALAGGSAGDGAQAAG) are compositionally biased toward low complexity. Ser-102, Ser-129, and Ser-140 each carry phosphoserine. The segment covering 132-144 (PSLPGTPHSPAPP) has biased composition (pro residues). Thr-148 is subject to Phosphothreonine. Phosphoserine is present on residues Ser-227, Ser-242, Ser-251, Ser-253, Ser-266, and Ser-271. The span at 234–244 (LAQQGSGSSPK) shows a compositional bias: polar residues. Lys-285 participates in a covalent cross-link: Glycyl lysine isopeptide (Lys-Gly) (interchain with G-Cter in SUMO2). Positions 297-310 (SSPGSPQSPSSGAE) are enriched in low complexity. Glycyl lysine isopeptide (Lys-Gly) (interchain with G-Cter in SUMO2) cross-links involve residues Lys-336 and Lys-372. Ser-374 is subject to Phosphoserine. Thr-377 carries the post-translational modification Phosphothreonine. Glycyl lysine isopeptide (Lys-Gly) (interchain with G-Cter in SUMO2) cross-links involve residues Lys-384, Lys-397, and Lys-422. Ser-433 bears the Phosphoserine mark. Glycyl lysine isopeptide (Lys-Gly) (interchain with G-Cter in SUMO2) cross-links involve residues Lys-435, Lys-439, Lys-451, and Lys-464. Ser-495 carries the post-translational modification Phosphoserine. A C2H2-type 1; degenerate zinc finger spans residues 533–552 (YRCLECGDAFSLEKSLARHY). 5 consecutive C2H2-type zinc fingers follow at residues 705 to 727 (NVCP…QRMH), 764 to 787 (YRCP…QTSH), 792 to 815 (HKCP…YSQH), 827 to 849 (YKCA…FDQH), and 858 to 881 (FKCP…KNTH). The span at 880–890 (THQSGRLEETA) shows a compositional bias: basic and acidic residues. The interval 880-957 (THQSGRLEET…LGSKGLKGGG (78 aa)) is disordered. Residue Thr-900 is modified to Phosphothreonine. Low complexity predominate over residues 915-925 (AAPATEESSSS). Lys-954 participates in a covalent cross-link: Glycyl lysine isopeptide (Lys-Gly) (interchain with G-Cter in SUMO2). 2 C2H2-type zinc fingers span residues 963-986 (WTCG…KKEH) and 993-1016 (FPCR…RVNH). Lys-1043 participates in a covalent cross-link: Glycyl lysine isopeptide (Lys-Gly) (interchain with G-Cter in SUMO2). Residues 1051-1121 (LQLGAQSPGR…LRYRSSSSTE (71 aa)) are disordered. Ser-1057 carries the phosphoserine modification. Arg-1060 is modified (omega-N-methylarginine). Phosphoserine is present on residues Ser-1082, Ser-1083, and Ser-1085. Arg-1101 is modified (omega-N-methylarginine). Phosphoserine occurs at positions 1106 and 1118. The C2H2-type 9 zinc finger occupies 1135–1158 (QQCLDCGLCFASPGSLSRHRFISH). Positions 1159 to 1195 (KKRRGVGKASALGLGDGEEEAPPSRSDPDGGDSPLPA) are disordered. Residues Ser-1184, Ser-1191, and Ser-1211 each carry the phosphoserine modification. The C2H2-type 10 zinc finger occupies 1200–1222 (LTCKVCGKSCDSPLNLKTHFRTH).

This sequence belongs to the krueppel C2H2-type zinc-finger protein family. As to quaternary structure, interacts with ZMYND8. As to expression, widely expressed with highest levels in obvary, muscle, blood and lung.

Its subcellular location is the cytoplasm. The protein resides in the nucleus. Its function is as follows. May be involved in transcriptional regulation. This is Zinc finger protein 687 (ZNF687) from Homo sapiens (Human).